The chain runs to 261 residues: Class II histocompatibility antigen, M beta 1 chain (261 aa).

A signal peptide spans 1–18 (MAALWLLLLVLSLHCMGA). The segment at 19 to 112 (GGFVAHVEST…PFWNALTHRT (94 aa)) is beta-1. Residues 19–218 (GGFVAHVEST…PGLSPIQTVK (200 aa)) are Lumenal-facing. Intrachain disulfides connect Cys-29–Cys-97, Cys-43–Cys-53, and Cys-135–Cys-192. An N-linked (GlcNAc...) asparagine glycan is attached at Asn-75. Residues 113–207 (RPPSVRVAQT…GTSEPIRGDW (95 aa)) are beta-2. The region spanning 114 to 204 (PPSVRVAQTT…QHSGTSEPIR (91 aa)) is the Ig-like C1-type domain. The segment at 208-218 (TPGLSPIQTVK) is connecting peptide. The helical transmembrane segment at 219 to 239 (VSVSAATLGLGFIIFCVGFFR) threads the bilayer. The Cytoplasmic portion of the chain corresponds to 240–261 (WRKSHSSSYTPLSGSTYPEGRH). The YXXZ motif motif lies at 248–251 (YTPL).

This sequence belongs to the MHC class II family. As to quaternary structure, heterodimer of an alpha chain (DMA) and a beta chain (DMB). Interacts with MHCII; this interaction mediates rapid selection of high-affinity peptides.

It localises to the late endosome membrane. It is found in the lysosome membrane. Functionally, plays a critical role in catalyzing the release of class II-associated invariant chain peptide (CLIP) from newly synthesized MHC class II molecules and freeing the peptide binding site for acquisition of antigenic peptides. The polypeptide is Class II histocompatibility antigen, M beta 1 chain (H2-DMb1) (Mus musculus (Mouse)).